Reading from the N-terminus, the 579-residue chain is MNTAPSRPSPTRRDPYSFGDSRDTRRDRSPIRGSPRREPRDGRNGRDARDSRDIRDPRDLRDRRDSRDIRDHRDSRSVREARDLRDFRDFRDLRDSRDFRDHRDPVYDRYRDIRDSRDPLYRREGSYDRYLRVDDYCRRKDDSYFDRYRDSFDGRGPPGPESQSRAKERLKREERRREELYRRYFEEIQRRFDAERPVDCSVIVVNKQTKDYAESVGRKVRDLGMVVDLIFLNTEVSLSQALEDVSRGGSPFAIVITQQHQIHRSCTVNIMFGTPQEHRNMPQADAMVLVARNYERYKNDCREKEREEIARQAAKMANDAILQERDRGGPEEGGRGGHPPAIQSLINLLADNRYLTAEETDKIINYLRERKERLLRSSADSLPGPISRQPLGAASGSSLKSQPSSQPLQSGQVLPSATPTPAAPPTSQQELQAKILSLFNSGAVAANSSSASPSVATGSSQNQNFSTAANSQPQQRPQASGNQPPNIVGQAGSARNMGPRPGAPSQGLFGQPSSRLAPASTMASQRPVSSTGINFDNPSVQKALDTLIQSGPALSHLVSQTAAQVGRPQAPMGSYQRHY.

M1 is subject to N-acetylmethionine. The disordered stretch occupies residues 1–77 (MNTAPSRPSP…DIRDHRDSRS (77 aa)). A transcription repression region spans residues 1–158 (MNTAPSRPSP…RDSFDGRGPP (158 aa)). Residue T3 is modified to Phosphothreonine. 9 positions are modified to phosphoserine: S9, S21, S29, S34, S96, S116, S126, S143, and S151. Residues 11–77 (TRRDPYSFGD…DIRDHRDSRS (67 aa)) show a composition bias toward basic and acidic residues. A disordered region spans residues 148–172 (YRDSFDGRGPPGPESQSRAKERLKR). T274 is subject to Phosphothreonine. An LXXLL motif motif is present at residues 345 to 349 (LINLL). Residues S378 and S381 each carry the phosphoserine modification. 2 disordered regions span residues 378–428 (SADS…PTSQ) and 446–529 (ANSS…RPVS). Low complexity-rich tracts occupy residues 395 to 420 (SGSS…ATPT) and 446 to 460 (ANSS…TGSS). Residues 458–579 (GSSQNQNFST…APMGSYQRHY (122 aa)) are transcription activation. The segment covering 461-485 (QNQNFSTAANSQPQQRPQASGNQPP) has biased composition (polar residues).

Binds HTATIP2/TIP30. Interacts with YLPM1. Forms a complex with ILF2, ILF3, YLPM1, KHDRBS1, RBMX and PPP1CA.

Its subcellular location is the nucleus. Its function is as follows. Nuclear receptor coregulator that can have both coactivator and corepressor functions. Interacts with nuclear receptors for steroids (ESR1 and ESR2) independently of the steroid binding domain (AF-2) of the ESR receptors, and with the orphan nuclear receptor NR1D2. Involved in the coactivation of nuclear steroid receptors (ER) as well as the corepression of MYC in response to 17-beta-estradiol (E2). The sequence is that of Nuclear receptor coactivator 5 (Ncoa5) from Mus musculus (Mouse).